Reading from the N-terminus, the 472-residue chain is Na(+)/H(+) antiporter NhaA (472 aa).

11 helical membrane passes run 48–68 (AGGIVLMGTTVLTLIAANSAW), 91–111 (MSLHDLINDGLMSLFFLVVGL), 129–149 (ALPVFAAAGGMVVPALVYFAV), 157–177 (AGWGIPMATDIAFAVGILVLL), 185–205 (LIIFLTALAIADDLGAVLVIA), 210–230 (HEISLGAIGFASAVLFLLLLL), 237–257 (HAIPYGVLGVLLWMALHHSGV), 337–357 (GPWVTFIVIPLFALNNVGIDF), 374–394 (VCLGLVFGKFTGISVFSWIAV), 410–430 (LLGVAWLGGIGFTMSLFISQL), and 443–463 (LGILTASLLSAMIGMTWLYFG).

It belongs to the NhaA Na(+)/H(+) (TC 2.A.33) antiporter family.

Its subcellular location is the cell inner membrane. The catalysed reaction is Na(+)(in) + 2 H(+)(out) = Na(+)(out) + 2 H(+)(in). Functionally, na(+)/H(+) antiporter that extrudes sodium in exchange for external protons. The sequence is that of Na(+)/H(+) antiporter NhaA from Syntrophobacter fumaroxidans (strain DSM 10017 / MPOB).